The primary structure comprises 830 residues: Periplasmic nitrate reductase (830 aa).

The segment at residues methionine 1 to alanine 31 is a signal peptide (tat-type signal). Residues isoleucine 39–aspartate 95 enclose the 4Fe-4S Mo/W bis-MGD-type domain. Residues cysteine 46, cysteine 49, cysteine 53, and cysteine 81 each coordinate [4Fe-4S] cluster. Residues lysine 83, glutamine 150, asparagine 175, cysteine 179, tryptophan 212 to methionine 219, serine 243 to histidine 247, glutamine 262 to aspartate 264, methionine 372, glutamine 376, asparagine 482, serine 508 to aspartate 509, lysine 531, aspartate 558, and threonine 718 to threonine 727 contribute to the Mo-bis(molybdopterin guanine dinucleotide) site. Residue phenylalanine 794 coordinates substrate. Positions 802 and 819 each coordinate Mo-bis(molybdopterin guanine dinucleotide).

This sequence belongs to the prokaryotic molybdopterin-containing oxidoreductase family. NasA/NapA/NarB subfamily. Component of the periplasmic nitrate reductase NapAB complex composed of NapA and NapB. [4Fe-4S] cluster is required as a cofactor. It depends on Mo-bis(molybdopterin guanine dinucleotide) as a cofactor. In terms of processing, predicted to be exported by the Tat system. The position of the signal peptide cleavage has not been experimentally proven.

It localises to the periplasm. It carries out the reaction 2 Fe(II)-[cytochrome] + nitrate + 2 H(+) = 2 Fe(III)-[cytochrome] + nitrite + H2O. Catalytic subunit of the periplasmic nitrate reductase complex NapAB. Receives electrons from NapB and catalyzes the reduction of nitrate to nitrite. The chain is Periplasmic nitrate reductase from Yersinia pestis bv. Antiqua (strain Antiqua).